Here is an 861-residue protein sequence, read N- to C-terminus: Probable linoleate 9S-lipoxygenase 8 (861 aa).

The PLAT domain maps to 33-160 (FTDLASSLTG…NYKSDRIFFA (128 aa)). A Lipoxygenase domain is found at 163-861 (PYLPSETPEL…GKGIPNSVSI (699 aa)). A disordered region spans residues 220–245 (TLGGSAEYPYPRRGRTGRPPTRTDPK). The Fe cation site is built by His-522, His-527, His-713, Asn-717, and Ile-861.

This sequence belongs to the lipoxygenase family. In terms of assembly, monomer. It depends on Fe cation as a cofactor.

Its subcellular location is the cytoplasm. It carries out the reaction (9Z,12Z)-octadecadienoate + O2 = (9S)-hydroperoxy-(10E,12Z)-octadecadienoate. The protein operates within lipid metabolism; oxylipin biosynthesis. In terms of biological role, plant lipoxygenases may be involved in a number of diverse aspects of plant physiology including growth and development, pest resistance, and senescence or responses to wounding. Catalyzes the hydroperoxidation of lipids containing a cis,cis-1,4-pentadiene structure. The protein is Probable linoleate 9S-lipoxygenase 8 (LOX1.8) of Solanum tuberosum (Potato).